A 292-amino-acid chain; its full sequence is Proteasome subunit beta 2 (292 aa).

A propeptide spans 1 to 59 (MTVDRAPRITDGDTRLSFGSNLSSFSEYLRVHAPEHLPQNRFADTGGVVMGGGDVAPHG) (removed in mature form; by autocatalysis). T60 functions as the Nucleophile in the catalytic mechanism.

Belongs to the peptidase T1B family. In terms of assembly, the 20S proteasome core is composed of 14 alpha and 14 beta subunits that assemble into four stacked heptameric rings, resulting in a barrel-shaped structure. The two inner rings, each composed of seven catalytic beta subunits, are sandwiched by two outer rings, each composed of seven alpha subunits. All four combinations of alpha- and beta-subunits (beta2-alpha1, beta2-alpha2, beta1-alpha2 and beta1-alpha1) yield fully assembled and proteolytically active proteasomes. The catalytic chamber with the active sites is on the inside of the barrel. Has probably a gated structure, the ends of the cylinder being occluded by the N-termini of the alpha-subunits. Is likely capped by the proteasome-associated ATPase, ARC.

It localises to the cytoplasm. The enzyme catalyses Cleavage of peptide bonds with very broad specificity.. Its pathway is protein degradation; proteasomal Pup-dependent pathway. Its activity is regulated as follows. The formation of the proteasomal ATPase ARC-20S proteasome complex, likely via the docking of the C-termini of ARC into the intersubunit pockets in the alpha-rings, may trigger opening of the gate for substrate entry. Interconversion between the open-gate and close-gate conformations leads to a dynamic regulation of the 20S proteasome proteolysis activity. Component of the proteasome core, a large protease complex with broad specificity involved in protein degradation. The R.erythropolis proteasomes are able to cleave oligopeptides after Tyr, Phe and Leu, very poorly after Arg but not after Glu. Thus, displays chymotrypsin-like activity, low trypsin-like activity but no caspase-like activity. The polypeptide is Proteasome subunit beta 2 (Rhodococcus erythropolis (Arthrobacter picolinophilus)).